Reading from the N-terminus, the 252-residue chain is Triosephosphate isomerase (252 aa).

Substrate is bound at residue asparagine 9–lysine 11. Histidine 95 acts as the Electrophile in catalysis. Glutamate 167 acts as the Proton acceptor in catalysis. Residues glycine 173, serine 213, and glycine 234–glycine 235 contribute to the substrate site.

Belongs to the triosephosphate isomerase family. Homodimer.

It localises to the cytoplasm. The enzyme catalyses D-glyceraldehyde 3-phosphate = dihydroxyacetone phosphate. The protein operates within carbohydrate biosynthesis; gluconeogenesis. It participates in carbohydrate degradation; glycolysis; D-glyceraldehyde 3-phosphate from glycerone phosphate: step 1/1. Its function is as follows. Involved in the gluconeogenesis. Catalyzes stereospecifically the conversion of dihydroxyacetone phosphate (DHAP) to D-glyceraldehyde-3-phosphate (G3P). This is Triosephosphate isomerase from Lactiplantibacillus plantarum (strain ATCC BAA-793 / NCIMB 8826 / WCFS1) (Lactobacillus plantarum).